Consider the following 346-residue polypeptide: MINSKQKIAVLGAGSWGTALAALVARHDYPTILWGRDVRVIQSIDIQHQNFRYLPSIMLPQTLRATTDLAAAVSGADWVLVAVPSYAFTETLCRLAPLLSIGVGVAWATKGFEPGSGRFLHEVAREILGGDAPLAVVTGPSFAKEVTLGLPTAVTVHGEDACFTQMVANAMHGPMFRAYTGNDVIGAELGGAMKNVLAVAIGVADGMQLGMNARAGLITRGLNEMLRLSAVIGARPETLMGLAGLGDLVLTCTGDLSRNRRLGFALGRGQSLSDAIREIGQVVESVQTSDEVMRHAEQNGVELPISEAVRAVLREEITPYAGMKVLLAREQKPEYLDILFKANCSL.

Positions 15, 16, 36, and 110 each coordinate NADPH. K110, G139, and S141 together coordinate sn-glycerol 3-phosphate. A143 is a binding site for NADPH. Sn-glycerol 3-phosphate-binding residues include K194, D247, S257, R258, and N259. K194 serves as the catalytic Proton acceptor. R258 contributes to the NADPH binding site. NADPH is bound by residues V282 and E284.

The protein belongs to the NAD-dependent glycerol-3-phosphate dehydrogenase family.

It localises to the cytoplasm. The enzyme catalyses sn-glycerol 3-phosphate + NAD(+) = dihydroxyacetone phosphate + NADH + H(+). It catalyses the reaction sn-glycerol 3-phosphate + NADP(+) = dihydroxyacetone phosphate + NADPH + H(+). It functions in the pathway membrane lipid metabolism; glycerophospholipid metabolism. Its function is as follows. Catalyzes the reduction of the glycolytic intermediate dihydroxyacetone phosphate (DHAP) to sn-glycerol 3-phosphate (G3P), the key precursor for phospholipid synthesis. The polypeptide is Glycerol-3-phosphate dehydrogenase [NAD(P)+] (Xylella fastidiosa (strain M23)).